The chain runs to 170 residues: MSQLEPRQQAFRNAMAHLSAAVNVITSNGPAGRCGITATAVCSVTDSPPTLMLCINRNSEMNTVFKANGRLCVNVLSGEHEEVARHFAGMTEVPMERRFALHDWREGLAGLPVLHGALANLQGRIAEVQEIGTHSVLLLELEDIQVLEQGDGLVYFSRSFHRLQCPRRAA.

Belongs to the non-flavoprotein flavin reductase family. HpaC subfamily. As to quaternary structure, monomer. HPA 3-hydroxylase consists of a reductase component HpaC and an oxygenase component HpaB. Some form of interactions between the reductase and the oxygenase facilitate the transfer of FADH(-) to the oxygenase in P.aeruginosa, although interactions are not required in other species.

It catalyses the reaction FADH2 + NAD(+) = FAD + NADH + 2 H(+). The protein operates within aromatic compound metabolism; 4-hydroxyphenylacetate degradation; pyruvate and succinate semialdehyde from 4-hydroxyphenylacetate: step 1/7. With respect to regulation, the rate of FAD reduction is independent of the presence of HPA, demonstrating that, in contrast to HPAH from A.baumannii, the activity of the HPAH reductase is not allosterically regulated by the substrate. Its function is as follows. Reductase component of the 4-hydroxyphenylacetate (HPA) 3-hydroxylase. Catalyzes the reduction of FAD by NADH. The reduced flavin is then transferred to the oxygenase component HpaB. Is also able to reduce FMN and riboflavin, but preferentially binds FAD. Has no activity with NADPH as the reductant. The sequence is that of 4-hydroxyphenylacetate 3-monooxygenase reductase component from Pseudomonas aeruginosa (strain ATCC 15692 / DSM 22644 / CIP 104116 / JCM 14847 / LMG 12228 / 1C / PRS 101 / PAO1).